A 316-amino-acid chain; its full sequence is Methionyl-tRNA formyltransferase (316 aa).

(6S)-5,6,7,8-tetrahydrofolate is bound at residue 117-120 (SLLP).

It belongs to the Fmt family.

The catalysed reaction is L-methionyl-tRNA(fMet) + (6R)-10-formyltetrahydrofolate = N-formyl-L-methionyl-tRNA(fMet) + (6S)-5,6,7,8-tetrahydrofolate + H(+). Functionally, attaches a formyl group to the free amino group of methionyl-tRNA(fMet). The formyl group appears to play a dual role in the initiator identity of N-formylmethionyl-tRNA by promoting its recognition by IF2 and preventing the misappropriation of this tRNA by the elongation apparatus. The chain is Methionyl-tRNA formyltransferase from Janthinobacterium sp. (strain Marseille) (Minibacterium massiliensis).